A 176-amino-acid polypeptide reads, in one-letter code: NAD(P)H-quinone oxidoreductase subunit 6, chloroplastic (176 aa).

A run of 5 helical transmembrane segments spans residues 10–30 (FLLVFLGSGIILGGLGVVLLT), 32–52 (PIFSAFSLGLVLFCISLFHIP), 60–80 (AAQLLIYVGAINVLIIFAVMF), 107–127 (IFVSLITTILDTSWYGIIWTT), and 152–172 (FFLPFELVSIILLVALIGAIA).

The protein belongs to the complex I subunit 6 family. NDH is composed of at least 16 different subunits, 5 of which are encoded in the nucleus.

It is found in the plastid. Its subcellular location is the chloroplast thylakoid membrane. The catalysed reaction is a plastoquinone + NADH + (n+1) H(+)(in) = a plastoquinol + NAD(+) + n H(+)(out). It carries out the reaction a plastoquinone + NADPH + (n+1) H(+)(in) = a plastoquinol + NADP(+) + n H(+)(out). NDH shuttles electrons from NAD(P)H:plastoquinone, via FMN and iron-sulfur (Fe-S) centers, to quinones in the photosynthetic chain and possibly in a chloroplast respiratory chain. The immediate electron acceptor for the enzyme in this species is believed to be plastoquinone. Couples the redox reaction to proton translocation, and thus conserves the redox energy in a proton gradient. The protein is NAD(P)H-quinone oxidoreductase subunit 6, chloroplastic (ndhG) of Buxus microphylla (Littleleaf boxwood).